We begin with the raw amino-acid sequence, 1392 residues long: ATP-dependent helicase/nuclease subunit A (1392 aa).

One can recognise a UvrD-like helicase ATP-binding domain in the interval 4-595; it reads FKPTPAQSKA…IVLGENFRSM (592 aa). Residue 25–32 coordinates ATP; that stretch reads ASAGSGKT. The region spanning 623–929 is the UvrD-like helicase C-terminal domain; the sequence is AHLKYAATYY…NVMTIHGSKG (307 aa).

Belongs to the helicase family. AddA subfamily. Heterodimer of AddA and AddB/RexB. Mg(2+) serves as cofactor.

It catalyses the reaction Couples ATP hydrolysis with the unwinding of duplex DNA by translocating in the 3'-5' direction.. The catalysed reaction is ATP + H2O = ADP + phosphate + H(+). In terms of biological role, the heterodimer acts as both an ATP-dependent DNA helicase and an ATP-dependent, dual-direction single-stranded exonuclease. Recognizes the chi site generating a DNA molecule suitable for the initiation of homologous recombination. The AddA nuclease domain is required for chi fragment generation; this subunit has the helicase and 3' -&gt; 5' nuclease activities. In Limosilactobacillus reuteri subsp. reuteri (strain JCM 1112) (Lactobacillus reuteri), this protein is ATP-dependent helicase/nuclease subunit A.